The chain runs to 742 residues: MKDDFAEEEEVQSFGYKRFGIQEGTQCTKCKNNWALKFSIILLYILCVLLTITIAILGYKVVEKMDNVTGGLETSHRRYTEKLTEVESDLKKLDDQAGQKALNTNTELSSFRSDILALRQQLHDIAEKTTRNKDTLEKLQESGNVLDDRQSQIRSALDSNSFMIISVNKTLQAYTGYINNLQQDTSNIQSDLQNQVHSHNVVIMNLNNLNLTQIQQRNLISVLQKSMEDKSLAILRIKNDFQNLQQVVLQARKDTDWLKEKVQNLQTLAANNSALAKANNDTLEDMNNQLSSFSGQMENISTIAQANEQNLKDLQEQHKEYENRTSAKFNQLEERFQVFETDIVNIISNISYTAHHLRTLTSNLNEVRTTCTDTLSKHSDELIFMNSTLANIRLDSASLKMQQDLMRSRLDVEVANLSVIMEEMKLVDSKHGQLIKNFTILQGPPGPRGPKGDRGPQGPLGPAGLKGQKGEKGEPGPPGPAGEKGPPGPIGPPGEKGGKGSRGSPGSKGQRGSPGKTGLPGPSGDPGPPGPQGKDGPQGPQGPPGFQGLQGTVGEPGVPGPRGLPGLPGVPGLPGPKGPPGPPGPPGPGMPMALQSEPTSVPEANGCSPHWKNYTEKCYYFSIEREIFEEAKLFCEEKASRLVIINNKEEQQWIKRQISGKGSFWIGLTDSEKENEWRWLDGSLPLYTNWKTGQPDNWNHGHGPGEDCAGLIYAGLWNDFYCEDVNNFICEKDMDKEQIFGV.

The Cytoplasmic segment spans residues 1–37; the sequence is MKDDFAEEEEVQSFGYKRFGIQEGTQCTKCKNNWALK. A helical; Signal-anchor for type II membrane protein transmembrane segment spans residues 38 to 58; sequence FSIILLYILCVLLTITIAILG. Over 59–742 the chain is Extracellular; the sequence is YKVVEKMDNV…DMDKEQIFGV (684 aa). Coiled coils occupy residues 71–101 and 271–334; these read GLETSHRRYTEKLTEVESDLKKLDDQAGQKA and NNSA…QLEE. The disordered stretch occupies residues 439-605; it reads TILQGPPGPR…SEPTSVPEAN (167 aa). Collagen-like domains lie at 467–526 and 527–586; these read GQKG…SGDP and GPPG…PGPP. The segment covering 475 to 492 has biased composition (pro residues); the sequence is PGPPGPAGEKGPPGPIGP. Composition is skewed to low complexity over residues 502–522 and 532–556; these read RGSPGSKGQRGSPGKTGLPGP and QGKDGPQGPQGPPGFQGLQGTVGEP. Residues 571-589 are compositionally biased toward pro residues; that stretch reads PGLPGPKGPPGPPGPPGPG. Intrachain disulfides connect cysteine 607-cysteine 618, cysteine 635-cysteine 730, and cysteine 708-cysteine 722. The region spanning 614 to 731 is the C-type lectin domain; sequence YTEKCYYFSI…CEDVNNFICE (118 aa). Isoleucine 644, asparagine 646, glutamate 650, aspartate 670, and glutamate 674 together coordinate Ca(2+). A carbohydrate is bound by residues lysine 691, glutamine 694, and aspartate 696. The Ca(2+) site is built by glutamine 694, aspartate 696, asparagine 697, glutamate 706, aspartate 707, asparagine 718, aspartate 719, and glutamate 731. Position 706 (glutamate 706) interacts with a carbohydrate. 2 residues coordinate a carbohydrate: asparagine 718 and aspartate 719.

Widely expressed.

It is found in the membrane. In terms of biological role, scavenger receptor that displays several functions associated with host defense. Binds to carbohydrates. This is Collectin-12 (COLEC12) from Gallus gallus (Chicken).